The sequence spans 162 residues: Shikimate kinase (162 aa).

10–15 is a binding site for ATP; that stretch reads GAGKST. Residue Ser-14 participates in Mg(2+) binding. Positions 28, 52, and 73 each coordinate substrate. Arg-113 is an ATP binding site. Position 129 (Arg-129) interacts with substrate.

The protein belongs to the shikimate kinase family. In terms of assembly, monomer. It depends on Mg(2+) as a cofactor.

It localises to the cytoplasm. The catalysed reaction is shikimate + ATP = 3-phosphoshikimate + ADP + H(+). Its pathway is metabolic intermediate biosynthesis; chorismate biosynthesis; chorismate from D-erythrose 4-phosphate and phosphoenolpyruvate: step 5/7. Its function is as follows. Catalyzes the specific phosphorylation of the 3-hydroxyl group of shikimic acid using ATP as a cosubstrate. The polypeptide is Shikimate kinase (Lactococcus lactis subsp. cremoris (strain MG1363)).